A 64-amino-acid chain; its full sequence is uncharacterized protein (64 aa).

This is an uncharacterized protein from Dictyostelium discoideum (Social amoeba).